Reading from the N-terminus, the 407-residue chain is Expansin-like protein 2 (407 aa).

The first 23 residues, 1 to 23 (MKMKNFLSKSLLVLLIGLIGVKS), serve as a signal peptide directing secretion. The Expansin-like EG45 domain occupies 42 to 141 (HGNCGYEQLT…KKVSCDVTGN (100 aa)). 2 disulfides stabilise this stretch: C45–C75 and C78–C136. 3 N-linked (GlcNAc...) asparagine glycosylation sites follow: N70, N117, and N387.

This sequence belongs to the expansin family. Expansin A subfamily.

The protein localises to the secreted. Functionally, unlikely to encode with a protein with expansin activity. In Dictyostelium discoideum (Social amoeba), this protein is Expansin-like protein 2 (expl2).